We begin with the raw amino-acid sequence, 248 residues long: 1-(5-phosphoribosyl)-5-[(5-phosphoribosylamino)methylideneamino] imidazole-4-carboxamide isomerase (248 aa).

Catalysis depends on aspartate 8, which acts as the Proton acceptor. Residue aspartate 131 is the Proton donor of the active site.

It belongs to the HisA/HisF family.

The protein resides in the cytoplasm. It catalyses the reaction 1-(5-phospho-beta-D-ribosyl)-5-[(5-phospho-beta-D-ribosylamino)methylideneamino]imidazole-4-carboxamide = 5-[(5-phospho-1-deoxy-D-ribulos-1-ylimino)methylamino]-1-(5-phospho-beta-D-ribosyl)imidazole-4-carboxamide. It functions in the pathway amino-acid biosynthesis; L-histidine biosynthesis; L-histidine from 5-phospho-alpha-D-ribose 1-diphosphate: step 4/9. In Nitrosomonas eutropha (strain DSM 101675 / C91 / Nm57), this protein is 1-(5-phosphoribosyl)-5-[(5-phosphoribosylamino)methylideneamino] imidazole-4-carboxamide isomerase.